A 649-amino-acid polypeptide reads, in one-letter code: 70 kDa protein (649 aa).

4 disordered regions span residues 28-80, 257-286, 311-359, and 458-550; these read LRRG…DFSP, ALSL…AASD, TATS…SKQQ, and QSAE…PSSL. Residues 268–279 show a composition bias toward polar residues; the sequence is KSTSPCNNSQLP. Basic residues predominate over residues 330 to 349; it reads RLQRSLHLHSRSPHSSHFRP. Polar residues predominate over residues 504-515; that stretch reads DVSNSETKNCPS. 2 stretches are compositionally biased toward low complexity: residues 524–533 and 540–550; these read PNHLHPLLPG and PRQLSPSPSSL.

The protein belongs to the tymoviridae protein p69 family.

In Solanum lycopersicum (Tomato), this protein is 70 kDa protein.